Consider the following 338-residue polypeptide: MSVSGLPFDDFRTLLRDLPGPDARALVAARERDAQLTKPPGALGRLEEIAFWLAAWTGRPPAVNRPLVAIFAGNHGVTRQGITPFPPAVTQQMVENFAAGGAAINQICVTHDLGLKVFDLALDYPTGDITEEAALSERDCAATMAFGMEAIAGGTDLLCIGEMGIGNTTIAAAINYALYGGSARDWVGPGTGSEGDMLERKVAAVEKAVALHSDHLDDPLEIMRRLGGREIAAMAGAILAARMERIPVLIDGYVATAAAAILKAANPSALDHCLIGHVSAEPGHLRSIEMLGKTPLLALGMRLGEGTGAALAAGIVKAAAACHSGMATFAQAGVSGKH.

Glu-305 acts as the Proton acceptor in catalysis.

Belongs to the CobT family.

It catalyses the reaction 5,6-dimethylbenzimidazole + nicotinate beta-D-ribonucleotide = alpha-ribazole 5'-phosphate + nicotinate + H(+). It functions in the pathway nucleoside biosynthesis; alpha-ribazole biosynthesis; alpha-ribazole from 5,6-dimethylbenzimidazole: step 1/2. Its function is as follows. Catalyzes the synthesis of alpha-ribazole-5'-phosphate from nicotinate mononucleotide (NAMN) and 5,6-dimethylbenzimidazole (DMB). In Rhizobium etli (strain CIAT 652), this protein is Nicotinate-nucleotide--dimethylbenzimidazole phosphoribosyltransferase.